The sequence spans 70 residues: MWFEILPGIAVMGTCLVIPGLATAYIHRFTNGGKEKRVAHFVYHWDLMERDRHISGVNRYYVSKGLENID.

A helical membrane pass occupies residues 1–21 (MWFEILPGIAVMGTCLVIPGL).

The protein belongs to the complex I NDUFA1 subunit family. As to quaternary structure, complex I is composed of 45 different subunits.

It is found in the mitochondrion inner membrane. Accessory subunit of the mitochondrial membrane respiratory chain NADH dehydrogenase (Complex I), that is believed not to be involved in catalysis. Complex I functions in the transfer of electrons from NADH to the respiratory chain. The immediate electron acceptor for the enzyme is believed to be ubiquinone. The polypeptide is NADH dehydrogenase [ubiquinone] 1 alpha subcomplex subunit 1 (NDUFA1) (Varecia rubra (Red ruffed lemur)).